Consider the following 354-residue polypeptide: tRNA N6-adenosine threonylcarbamoyltransferase (354 aa).

Fe cation contacts are provided by His115 and His119. Residues Leu138–Gly142, Asp171, Gly184, and Asn276 contribute to the substrate site. Residue Asp304 coordinates Fe cation.

It belongs to the KAE1 / TsaD family. It depends on Fe(2+) as a cofactor.

The protein resides in the cytoplasm. The enzyme catalyses L-threonylcarbamoyladenylate + adenosine(37) in tRNA = N(6)-L-threonylcarbamoyladenosine(37) in tRNA + AMP + H(+). In terms of biological role, required for the formation of a threonylcarbamoyl group on adenosine at position 37 (t(6)A37) in tRNAs that read codons beginning with adenine. Is involved in the transfer of the threonylcarbamoyl moiety of threonylcarbamoyl-AMP (TC-AMP) to the N6 group of A37, together with TsaE and TsaB. TsaD likely plays a direct catalytic role in this reaction. This is tRNA N6-adenosine threonylcarbamoyltransferase from Xanthomonas oryzae pv. oryzae (strain MAFF 311018).